The primary structure comprises 259 residues: uncharacterized protein (259 aa).

To M.thermoautotrophicum MTH738.

This is an uncharacterized protein from Methanocaldococcus jannaschii (strain ATCC 43067 / DSM 2661 / JAL-1 / JCM 10045 / NBRC 100440) (Methanococcus jannaschii).